The following is a 798-amino-acid chain: Exo-1,4-beta-xylosidase xlnD (798 aa).

Residues 1–20 form the signal peptide; that stretch reads MPGAASIVAVLAALLPTALG. Residues Asn-23, Asn-87, Asn-142, and Asn-237 are each glycosylated (N-linked (GlcNAc...) asparagine). The active site involves Asp-310. N-linked (GlcNAc...) asparagine glycosylation is found at Asn-326, Asn-391, Asn-404, Asn-443, Asn-480, Asn-522, Asn-618, Asn-645, Asn-658, Asn-685, and Asn-707.

The protein belongs to the glycosyl hydrolase 3 family.

The protein localises to the secreted. It catalyses the reaction Hydrolysis of (1-&gt;4)-beta-D-xylans, to remove successive D-xylose residues from the non-reducing termini.. It functions in the pathway glycan degradation; xylan degradation. Its function is as follows. Xylan 1,4-beta-xylosidase involved in the hydrolysis of xylan, a major structural heterogeneous polysaccharide found in plant biomass representing the second most abundant polysaccharide in the biosphere, after cellulose. The protein is Exo-1,4-beta-xylosidase xlnD (xlnD) of Aspergillus oryzae (strain ATCC 42149 / RIB 40) (Yellow koji mold).